The following is a 967-amino-acid chain: Glutamate receptor 2.6 (967 aa).

The signal sequence occupies residues 1-31 (MSLFNHLLSRALPLWLLFFINFLVLLGKSQQ). Over 32–590 (EVLQVQVGIV…WVFLKPLTRE (559 aa)) the chain is Extracellular. N-linked (GlcNAc...) asparagine glycosylation is found at N45, N57, N121, N336, N345, N424, and N550. The helical transmembrane segment at 591–611 (LWFLTAASFLYIGIMVWIFEY) threads the bilayer. Over 612-621 (QASGDFRKQS) the chain is Cytoplasmic. A helical membrane pass occupies residues 622–642 (IINKISNVFYFSFSTLFFAHM). Residues 643–651 (RPSESIFTR) lie on the Cytoplasmic side of the membrane. A helical transmembrane segment spans residues 652–672 (VLVVVWCFVLLILTQSYTATL). Residues 673–832 (TSMLTVQELR…DSPIRLDHHS (160 aa)) are Extracellular-facing. N-linked (GlcNAc...) asparagine glycosylation occurs at N795. Residues 833 to 853 (FEALFTIVFVVSMLLLLAMLV) form a helical membrane-spanning segment. Residues 854–967 (CRRYRQESKS…AALFSRIKSA (114 aa)) lie on the Cytoplasmic side of the membrane. A compositionally biased stretch (polar residues) spans 864 to 874 (GEINANNSPTD). The segment at 864-913 (GEINANNSPTDGNMRAPPNQPTDDNMRAPTSPPIDDQVLEPPGPALNEAD) is disordered.

It belongs to the glutamate-gated ion channel (TC 1.A.10.1) family. As to quaternary structure, may form heteromers. As to expression, expressed predominantly in roots.

The protein localises to the membrane. In terms of biological role, glutamate-gated receptor that probably acts as a non-selective cation channel. May be involved in light-signal transduction and calcium homeostasis via the regulation of calcium influx into cells. The chain is Glutamate receptor 2.6 (GLR2.6) from Arabidopsis thaliana (Mouse-ear cress).